The primary structure comprises 310 residues: Methionyl-tRNA formyltransferase (310 aa).

A (6S)-5,6,7,8-tetrahydrofolate-binding site is contributed by 112 to 115 (SLLP).

It belongs to the Fmt family.

It catalyses the reaction L-methionyl-tRNA(fMet) + (6R)-10-formyltetrahydrofolate = N-formyl-L-methionyl-tRNA(fMet) + (6S)-5,6,7,8-tetrahydrofolate + H(+). Its function is as follows. Attaches a formyl group to the free amino group of methionyl-tRNA(fMet). The formyl group appears to play a dual role in the initiator identity of N-formylmethionyl-tRNA by promoting its recognition by IF2 and preventing the misappropriation of this tRNA by the elongation apparatus. The protein is Methionyl-tRNA formyltransferase of Pelagibacter ubique (strain HTCC1062).